Reading from the N-terminus, the 128-residue chain is uncharacterized protein (128 aa).

It to M.jannaschii MJ0766.

This is an uncharacterized protein from Methanocaldococcus jannaschii (strain ATCC 43067 / DSM 2661 / JAL-1 / JCM 10045 / NBRC 100440) (Methanococcus jannaschii).